The chain runs to 1463 residues: Secretory phospholipase A2 receptor (1463 aa).

Residues 1 to 20 (MPLLSLSLLLLLLQVPAGSA) form the signal peptide. Topologically, residues 21–1392 (ETAAWAVTPE…IHTVKKHPGK (1372 aa)) are extracellular. Residues 38–115 (KGIFIIQSEN…CDSTHVSLKW (78 aa)) enclose the Ricin B-type lectin domain. Residue asparagine 93 is glycosylated (N-linked (GlcNAc...) asparagine). Residues 173 to 221 (AHGTPCMFPFQYNQQWHHECTREGREDNLLWCATTSRYERDEKWGFCPD) enclose the Fibronectin type-II domain. Disulfide bonds link cysteine 178/cysteine 204, cysteine 192/cysteine 219, cysteine 260/cysteine 354, cysteine 330/cysteine 346, cysteine 406/cysteine 501, cysteine 478/cysteine 493, cysteine 617/cysteine 634, cysteine 699/cysteine 796, cysteine 774/cysteine 788, cysteine 840/cysteine 938, cysteine 915/cysteine 930, cysteine 992/cysteine 1096, cysteine 1068/cysteine 1088, cysteine 1209/cysteine 1223, cysteine 1280/cysteine 1377, and cysteine 1354/cysteine 1369. C-type lectin domains are found at residues 229–353 (CDAV…LPYV), 357–500 (YLNP…LFYL), 504–641 (TGLV…KAMS), 646–795 (PVEN…REWI), 799–937 (PRDV…MPSI), 941–1095 (KKVW…YGFV), 1099–1230 (MQDA…LQGA), and 1235–1376 (PTET…KGFI). Asparagine 454 is a glycosylation site (N-linked (GlcNAc...) asparagine). Asparagine 1057 carries an N-linked (GlcNAc...) asparagine glycan. Residues 1393–1421 (GPSHSVIPLTVALTLLVILAISTLSFCMY) traverse the membrane as a helical segment. Over 1422–1463 (KHSHIIFGRLAQFRNPYYPSANFSTVHLEENILISDLEKNDQ) the chain is Cytoplasmic. The short motif at 1436-1442 (NPYYPSA) is the Endocytosis signal element.

Interacts with sPLA2-IB/PLA2G1B; this interaction mediates intracellular signaling as well as clearance of extracellular sPLA2-IB/PLA2G1B via endocytotic pathway. Interacts with sPLA2-X/PLA2G10; this interaction mediates sPLA2-X/PLA2G10 clearance and inactivation. Post-translationally, the secretory phospholipase A2 receptor form may be produced by the action of metalloproteinases. It contains all extracellular domains and only lacks transmembrane and cytosolic regions. It is however unclear whether this form is produced by proteolytic cleavage as suggested by some experiments, or by alternative splicing.

The protein resides in the cell membrane. Its subcellular location is the secreted. Its function is as follows. Receptor for secretory phospholipase A2 (sPLA2). Also able to bind to snake PA2-like toxins. Although its precise function remains unclear, binding of sPLA2 to its receptor participates in both positive and negative regulation of sPLA2 functions as well as clearance of sPLA2. Binding of sPLA2-IB/PLA2G1B induces various effects depending on the cell type, such as activation of the mitogen-activated protein kinase (MAPK) cascade to induce cell proliferation, the production of lipid mediators, selective release of arachidonic acid in bone marrow-derived mast cells. In neutrophils, binding of sPLA2-IB/PLA2G1B can activate p38 MAPK to stimulate elastase release and cell adhesion. May be involved in responses in pro-inflammatory cytokine productions during endotoxic shock. Also has endocytic properties and rapidly internalizes sPLA2 ligands, which is particularly important for the clearance of extracellular sPLA2s to protect their potent enzymatic activities. The soluble secretory phospholipase A2 receptor form is circulating and acts as a negative regulator of sPLA2 functions by blocking the biological functions of sPLA2-IB/PLA2G1B and sPLA2-X/PLA2G10. This is Secretory phospholipase A2 receptor (PLA2R1) from Bos taurus (Bovine).